The chain runs to 1059 residues: Translation initiation factor IF-2 (1059 aa).

Composition is skewed to polar residues over residues 55–75 (LPHS…NQDS) and 107–126 (KINN…NNQV). Disordered regions lie at residues 55 to 81 (LPHS…GYNE), 93 to 394 (PKPL…RLRL), and 418 to 468 (SLSL…QSAE). The span at 178–187 (DSNEKSKVEV) shows a compositional bias: basic and acidic residues. Residues 202–211 (LNRNLRNTGV) are compositionally biased toward polar residues. Basic residues predominate over residues 216–229 (QKNKKPKQEGKKRK). Composition is skewed to basic and acidic residues over residues 230–252 (DKEE…DTSI) and 259–273 (SKKE…RESV). Over residues 274 to 284 (KTSASDTSSQL) the composition is skewed to polar residues. Basic and acidic residues-rich tracts occupy residues 291–300 (KPTVKLKQEQ) and 359–368 (LTKDKKVSKW). Residues 452 to 463 (SHESVQSESNEQ) show a composition bias toward low complexity. One can recognise a tr-type G domain in the interval 556–733 (RRPPVVTIMG…EVEDLQANPE (178 aa)). The interval 565–572 (GHVDHGKT) is G1. 565-572 (GHVDHGKT) serves as a coordination point for GTP. The interval 590–594 (GITQH) is G2. The G3 stretch occupies residues 615 to 618 (DTPG). Residues 615–619 (DTPGH) and 669–672 (NKID) each bind GTP. A G4 region spans residues 669–672 (NKID). The G5 stretch occupies residues 705 to 707 (SAI).

The protein belongs to the TRAFAC class translation factor GTPase superfamily. Classic translation factor GTPase family. IF-2 subfamily.

It is found in the cytoplasm. Functionally, one of the essential components for the initiation of protein synthesis. Protects formylmethionyl-tRNA from spontaneous hydrolysis and promotes its binding to the 30S ribosomal subunits. Also involved in the hydrolysis of GTP during the formation of the 70S ribosomal complex. This is Translation initiation factor IF-2 from Trichodesmium erythraeum (strain IMS101).